The chain runs to 174 residues: Large ribosomal subunit protein bL17 (174 aa).

The protein belongs to the bacterial ribosomal protein bL17 family. In terms of assembly, part of the 50S ribosomal subunit. Contacts protein L32.

The protein is Large ribosomal subunit protein bL17 of Acetivibrio thermocellus (strain ATCC 27405 / DSM 1237 / JCM 9322 / NBRC 103400 / NCIMB 10682 / NRRL B-4536 / VPI 7372) (Clostridium thermocellum).